A 192-amino-acid chain; its full sequence is GTP cyclohydrolase-2 (192 aa).

50–54 (RLHSE) provides a ligand contact to GTP. Residues C55, C66, and C68 each contribute to the Zn(2+) site. Residues 92–94 (EGR) and T114 contribute to the GTP site. Residue D126 is the Proton acceptor of the active site. The active-site Nucleophile is R128. Residues T149 and K154 each coordinate GTP.

This sequence belongs to the GTP cyclohydrolase II family. Requires Zn(2+) as cofactor.

The catalysed reaction is GTP + 4 H2O = 2,5-diamino-6-hydroxy-4-(5-phosphoribosylamino)-pyrimidine + formate + 2 phosphate + 3 H(+). The protein operates within cofactor biosynthesis; riboflavin biosynthesis; 5-amino-6-(D-ribitylamino)uracil from GTP: step 1/4. Functionally, catalyzes the conversion of GTP to 2,5-diamino-6-ribosylamino-4(3H)-pyrimidinone 5'-phosphate (DARP), formate and pyrophosphate. The protein is GTP cyclohydrolase-2 of Helicobacter pylori (strain P12).